Here is a 156-residue protein sequence, read N- to C-terminus: Small ribosomal subunit protein uS7 (156 aa).

This sequence belongs to the universal ribosomal protein uS7 family. Part of the 30S ribosomal subunit. Contacts proteins S9 and S11.

In terms of biological role, one of the primary rRNA binding proteins, it binds directly to 16S rRNA where it nucleates assembly of the head domain of the 30S subunit. Is located at the subunit interface close to the decoding center, probably blocks exit of the E-site tRNA. The polypeptide is Small ribosomal subunit protein uS7 (Clostridium kluyveri (strain NBRC 12016)).